We begin with the raw amino-acid sequence, 934 residues long: Isoleucine--tRNA ligase (934 aa).

Positions 58–68 match the 'HIGH' region motif; sequence PYANGEIHIGH. Glu559 lines the L-isoleucyl-5'-AMP pocket. The 'KMSKS' region signature appears at 600–604; that stretch reads KMSKS. Residue Lys603 participates in ATP binding. Residues Cys897, Cys900, Cys917, and Cys920 each coordinate Zn(2+).

The protein belongs to the class-I aminoacyl-tRNA synthetase family. IleS type 1 subfamily. As to quaternary structure, monomer. It depends on Zn(2+) as a cofactor.

The protein localises to the cytoplasm. It carries out the reaction tRNA(Ile) + L-isoleucine + ATP = L-isoleucyl-tRNA(Ile) + AMP + diphosphate. Its function is as follows. Catalyzes the attachment of isoleucine to tRNA(Ile). As IleRS can inadvertently accommodate and process structurally similar amino acids such as valine, to avoid such errors it has two additional distinct tRNA(Ile)-dependent editing activities. One activity is designated as 'pretransfer' editing and involves the hydrolysis of activated Val-AMP. The other activity is designated 'posttransfer' editing and involves deacylation of mischarged Val-tRNA(Ile). In Teredinibacter turnerae (strain ATCC 39867 / T7901), this protein is Isoleucine--tRNA ligase.